A 378-amino-acid chain; its full sequence is Lipid-A-disaccharide synthase (378 aa).

Belongs to the LpxB family.

The enzyme catalyses a lipid X + a UDP-2-N,3-O-bis[(3R)-3-hydroxyacyl]-alpha-D-glucosamine = a lipid A disaccharide + UDP + H(+). It functions in the pathway bacterial outer membrane biogenesis; LPS lipid A biosynthesis. In terms of biological role, condensation of UDP-2,3-diacylglucosamine and 2,3-diacylglucosamine-1-phosphate to form lipid A disaccharide, a precursor of lipid A, a phosphorylated glycolipid that anchors the lipopolysaccharide to the outer membrane of the cell. The polypeptide is Lipid-A-disaccharide synthase (Pseudomonas aeruginosa (strain UCBPP-PA14)).